The sequence spans 614 residues: Kelch-like protein 40 (614 aa).

The region spanning Ile33 to Glu100 is the BTB domain. In terms of domain architecture, BACK spans Cys135 to Glu237. 5 Kelch repeats span residues Gln353–Asn405, Ser406–Asn455, Leu456–Gly503, Lys504–Gly550, and Leu552–Leu606.

This sequence belongs to the KLHL40 family. Component of the BCR(KLHL40) E3 ubiquitin ligase complex.

The protein resides in the cytoplasm. It localises to the myofibril. Its subcellular location is the sarcomere. It is found in the a band. The protein localises to the i band. In terms of biological role, substrate-specific adapter of a BCR (BTB-CUL3-RBX1) E3 ubiquitin ligase complex that acts as a key regulator of skeletal muscle development. This is Kelch-like protein 40 (klhl40) from Xenopus laevis (African clawed frog).